The primary structure comprises 130 residues: Large ribosomal subunit protein bL12 (130 aa).

The protein belongs to the bacterial ribosomal protein bL12 family. As to quaternary structure, homodimer. Part of the ribosomal stalk of the 50S ribosomal subunit. Forms a multimeric L10(L12)X complex, where L10 forms an elongated spine to which 2 to 4 L12 dimers bind in a sequential fashion. Binds GTP-bound translation factors.

Functionally, forms part of the ribosomal stalk which helps the ribosome interact with GTP-bound translation factors. Is thus essential for accurate translation. This Nostoc punctiforme (strain ATCC 29133 / PCC 73102) protein is Large ribosomal subunit protein bL12.